Here is a 132-residue protein sequence, read N- to C-terminus: Agouti-signaling protein (132 aa).

Positions 1-22 (MDVTRLLLATLLVFLCFFTAYS) are cleaved as a signal peptide. The N-linked (GlcNAc...) asparagine glycan is linked to N39. Residues 62 to 88 (ISRKEAEKKRSSKKEASMKKVARPRTP) form a disordered region. Residues 63-79 (SRKEAEKKRSSKKEASM) show a composition bias toward basic and acidic residues. Cystine bridges form between C93–C108, C100–C114, C107–C125, C111–C132, and C116–C123. An Agouti domain is found at 93-132 (CVATRDSCKPPAPACCDPCASCQCRFFRSACSCRVLSLNC).

It localises to the secreted. In terms of biological role, involved in the regulation of melanogenesis. The binding of ASP to MC1R precludes alpha-MSH initiated signaling and thus blocks production of cAMP, leading to a down-regulation of eumelanogenesis (brown/black pigment) and thus increasing synthesis of pheomelanin (yellow/red pigment). This chain is Agouti-signaling protein (ASIP), found in Macaca radiata (Bonnet macaque).